The sequence spans 395 residues: Phosphoglycerate kinase (395 aa).

Substrate-binding positions include 20 to 22 (DFN), R36, 59 to 62 (HLGR), R120, and R157. ATP is bound by residues K208, G296, E327, and 353-356 (GGDT).

The protein belongs to the phosphoglycerate kinase family. As to quaternary structure, monomer.

The protein resides in the cytoplasm. The enzyme catalyses (2R)-3-phosphoglycerate + ATP = (2R)-3-phospho-glyceroyl phosphate + ADP. Its pathway is carbohydrate degradation; glycolysis; pyruvate from D-glyceraldehyde 3-phosphate: step 2/5. This is Phosphoglycerate kinase from Tropheryma whipplei (strain TW08/27) (Whipple's bacillus).